Reading from the N-terminus, the 201-residue chain is IMP cyclohydrolase (201 aa).

The protein belongs to the archaeal IMP cyclohydrolase family.

It carries out the reaction IMP + H2O = 5-formamido-1-(5-phospho-D-ribosyl)imidazole-4-carboxamide. It functions in the pathway purine metabolism; IMP biosynthesis via de novo pathway; IMP from 5-formamido-1-(5-phospho-D-ribosyl)imidazole-4-carboxamide: step 1/1. Functionally, catalyzes the cyclization of 5-formylamidoimidazole-4-carboxamide ribonucleotide to IMP. The sequence is that of IMP cyclohydrolase from Methanococcus maripaludis (strain C6 / ATCC BAA-1332).